A 427-amino-acid polypeptide reads, in one-letter code: tRNA(Ile)-lysidine synthase (427 aa).

25–30 (SGGLDS) is an ATP binding site.

The protein belongs to the tRNA(Ile)-lysidine synthase family.

It is found in the cytoplasm. The enzyme catalyses cytidine(34) in tRNA(Ile2) + L-lysine + ATP = lysidine(34) in tRNA(Ile2) + AMP + diphosphate + H(+). Its function is as follows. Ligates lysine onto the cytidine present at position 34 of the AUA codon-specific tRNA(Ile) that contains the anticodon CAU, in an ATP-dependent manner. Cytidine is converted to lysidine, thus changing the amino acid specificity of the tRNA from methionine to isoleucine. This is tRNA(Ile)-lysidine synthase from Histophilus somni (strain 2336) (Haemophilus somnus).